We begin with the raw amino-acid sequence, 274 residues long: Cytochrome b-c1 complex subunit Rieske, mitochondrial (274 aa).

The Mitochondrial matrix segment spans residues 79 to 103; that stretch reads SHTDVRVPDFSEYRRLEVLDSTKSS. Residues 104–140 form a helical membrane-spanning segment; it reads RESSEARKGFSYLVTGVTTVGVAYAAKNVVTQFVSSM. Topologically, residues 141–274 are mitochondrial intermembrane; that stretch reads SASADVLALA…FTSDDMVIVG (134 aa). In terms of domain architecture, Rieske spans 187–272; sequence EAAVELSQLR…YEFTSDDMVI (86 aa). [2Fe-2S] cluster contacts are provided by cysteine 217, histidine 219, cysteine 236, histidine 239, and serine 241. Cysteine 222 and cysteine 238 form a disulfide bridge.

The protein belongs to the Rieske iron-sulfur protein family. Component of the ubiquinol-cytochrome c oxidoreductase (cytochrome b-c1 complex, complex III, CIII), a multisubunit enzyme composed of 11 subunits. The complex is composed of 3 respiratory subunits cytochrome b, cytochrome c1 and Rieske protein UQCRFS1, 2 core protein subunits UQCRC1/QCR1 and UQCRC2/QCR2, and 6 low-molecular weight protein subunits UQCRH/QCR6, UQCRB/QCR7, UQCRQ/QCR8, UQCR10/QCR9, UQCR11/QCR10 and subunit 9, the cleavage product of Rieske protein UQCRFS1. The complex exists as an obligatory dimer and forms supercomplexes (SCs) in the inner mitochondrial membrane with NADH-ubiquinone oxidoreductase (complex I, CI) and cytochrome c oxidase (complex IV, CIV), resulting in different assemblies (supercomplex SCI(1)III(2)IV(1) and megacomplex MCI(2)III(2)IV(2)). Incorporation of the Rieske protein UQCRFS1 is the penultimate step in complex III assembly. Interacts with TTC19, which is involved in the clearance of UQCRFS1 fragments. In terms of assembly, component of the ubiquinol-cytochrome c oxidoreductase (cytochrome b-c1 complex, complex III, CIII). Subunit 9 corresponds to the mitochondrial targeting sequence (MTS) of Rieske protein UQCRFS1. It is retained after processing and incorporated inside complex III, where it remains bound to the complex and localizes between the 2 core subunits UQCRC1/QCR1 and UQCRC2/QCR2. It depends on [2Fe-2S] cluster as a cofactor. Post-translationally, proteolytic processing is necessary for the correct insertion of UQCRFS1 in the complex III dimer. Several fragments are generated during UQCRFS1 insertion, most probably due to the endogenous matrix-processing peptidase (MPP) activity of the 2 core protein subunits UQCRC1/QCR1 and UQCRC2/QCR2, which are homologous to the 2 mitochondrial-processing peptidase (MPP) subunits beta-MPP and alpha-MPP respectively. The action of the protease is also necessary for the clearance of the UQCRFS1 fragments.

It localises to the mitochondrion inner membrane. It catalyses the reaction a quinol + 2 Fe(III)-[cytochrome c](out) = a quinone + 2 Fe(II)-[cytochrome c](out) + 2 H(+)(out). Its function is as follows. Component of the ubiquinol-cytochrome c oxidoreductase, a multisubunit transmembrane complex that is part of the mitochondrial electron transport chain which drives oxidative phosphorylation. The respiratory chain contains 3 multisubunit complexes succinate dehydrogenase (complex II, CII), ubiquinol-cytochrome c oxidoreductase (cytochrome b-c1 complex, complex III, CIII) and cytochrome c oxidase (complex IV, CIV), that cooperate to transfer electrons derived from NADH and succinate to molecular oxygen, creating an electrochemical gradient over the inner membrane that drives transmembrane transport and the ATP synthase. The cytochrome b-c1 complex catalyzes electron transfer from ubiquinol to cytochrome c, linking this redox reaction to translocation of protons across the mitochondrial inner membrane, with protons being carried across the membrane as hydrogens on the quinol. In the process called Q cycle, 2 protons are consumed from the matrix, 4 protons are released into the intermembrane space and 2 electrons are passed to cytochrome c. The Rieske protein is a catalytic core subunit containing a [2Fe-2S] iron-sulfur cluster. It cycles between 2 conformational states during catalysis to transfer electrons from the quinol bound in the Q(0) site in cytochrome b to cytochrome c1. Incorporation of UQCRFS1 is the penultimate step in complex III assembly. Component of the ubiquinol-cytochrome c oxidoreductase (cytochrome b-c1 complex, complex III, CIII). UQCRFS1 undergoes proteolytic processing once it is incorporated in the complex III dimer. One of the fragments, called subunit 9, corresponds to its mitochondrial targeting sequence (MTS). The proteolytic processing is necessary for the correct insertion of UQCRFS1 in the complex III dimer, but the persistence of UQCRFS1-derived fragments may prevent newly imported UQCRFS1 to be processed and assembled into complex III and is detrimental for the complex III structure and function. The polypeptide is Cytochrome b-c1 complex subunit Rieske, mitochondrial (UQCRFS1) (Pongo pygmaeus (Bornean orangutan)).